The primary structure comprises 315 residues: Ribosomal protein L11 methyltransferase (315 aa).

Positions 162, 183, 205, and 248 each coordinate S-adenosyl-L-methionine.

Belongs to the methyltransferase superfamily. PrmA family.

It localises to the cytoplasm. The enzyme catalyses L-lysyl-[protein] + 3 S-adenosyl-L-methionine = N(6),N(6),N(6)-trimethyl-L-lysyl-[protein] + 3 S-adenosyl-L-homocysteine + 3 H(+). In terms of biological role, methylates ribosomal protein L11. The polypeptide is Ribosomal protein L11 methyltransferase (Oceanobacillus iheyensis (strain DSM 14371 / CIP 107618 / JCM 11309 / KCTC 3954 / HTE831)).